The following is a 158-amino-acid chain: 6,7-dimethyl-8-ribityllumazine synthase (158 aa).

5-amino-6-(D-ribitylamino)uracil-binding positions include F24, 62-64 (CFE), and 86-88 (AVI). (2S)-2-hydroxy-3-oxobutyl phosphate is bound at residue 91 to 92 (DT). Catalysis depends on H94, which acts as the Proton donor. F119 contacts 5-amino-6-(D-ribitylamino)uracil. A (2S)-2-hydroxy-3-oxobutyl phosphate-binding site is contributed by R133.

It belongs to the DMRL synthase family.

The catalysed reaction is (2S)-2-hydroxy-3-oxobutyl phosphate + 5-amino-6-(D-ribitylamino)uracil = 6,7-dimethyl-8-(1-D-ribityl)lumazine + phosphate + 2 H2O + H(+). It functions in the pathway cofactor biosynthesis; riboflavin biosynthesis; riboflavin from 2-hydroxy-3-oxobutyl phosphate and 5-amino-6-(D-ribitylamino)uracil: step 1/2. In terms of biological role, catalyzes the formation of 6,7-dimethyl-8-ribityllumazine by condensation of 5-amino-6-(D-ribitylamino)uracil with 3,4-dihydroxy-2-butanone 4-phosphate. This is the penultimate step in the biosynthesis of riboflavin. The protein is 6,7-dimethyl-8-ribityllumazine synthase of Picosynechococcus sp. (strain ATCC 27264 / PCC 7002 / PR-6) (Agmenellum quadruplicatum).